The primary structure comprises 233 residues: Riboflavin kinase (233 aa).

The interval 1–99 is unknown; that stretch reads MSGATSTGDV…YRRIFEDPGE (99 aa). The interval 100-233 is riboflavin kinase; sequence LALAGTVTSG…DDEVTIRVEA (134 aa). 109–114 lines the CDP pocket; that stretch reads GMGEGR. Residues threonine 138 and asparagine 140 each contribute to the Mg(2+) site. 2 residues coordinate FMN: threonine 200 and glutamate 208. Residue 213-216 participates in CDP binding; sequence VKLR.

This sequence belongs to the archaeal riboflavin kinase family. Mg(2+) serves as cofactor.

It catalyses the reaction riboflavin + CTP = CDP + FMN + H(+). Its pathway is cofactor biosynthesis; FMN biosynthesis; FMN from riboflavin (CTP route): step 1/1. In terms of biological role, catalyzes the CTP-dependent phosphorylation of riboflavin (vitamin B2) to form flavin mononucleotide (FMN). The protein is Riboflavin kinase (ribK) of Halobacterium salinarum (strain ATCC 700922 / JCM 11081 / NRC-1) (Halobacterium halobium).